The following is a 145-amino-acid chain: Histone H2B.10 (145 aa).

Positions 1-15 (MAKADKKPAEKKPAE) are enriched in basic and acidic residues. Positions 1-53 (MAKADKKPAEKKPAEKTPAAEPAAAAEKKPKAGKKLPKEPAGAGDKKKKRSKK) are disordered. K3 carries the post-translational modification N6-methyllysine. N6-acetyllysine occurs at positions 6 and 11. At K12 the chain carries N6,N6-dimethyllysine. N6-acetyllysine occurs at positions 16, 28, and 34. A compositionally biased stretch (low complexity) spans 16–25 (KTPAAEPAAA). K35 is subject to N6-acetyllysine; partial. Residue K141 forms a Glycyl lysine isopeptide (Lys-Gly) (interchain with G-Cter in ubiquitin) linkage.

Belongs to the histone H2B family. In terms of assembly, the nucleosome is a histone octamer containing two molecules each of H2A, H2B, H3 and H4 assembled in one H3-H4 heterotetramer and two H2A-H2B heterodimers. The octamer wraps approximately 147 bp of DNA. Interacts with ORTH2. Can be acetylated to form H2BK5ac, H2BK10ac, H2BK15ac, H2BK27ac, H2BK33ac and H2BK34ac. Post-translationally, dimethylated to form H2BK11me2. In terms of processing, monoubiquitinated by BRE1 to form H2BK143ub1 and deubiquitinated by UBP26. Required for heterochromatic histone H3 di- and trimethylation at H3K4me. May give a specific tag for epigenetic transcriptional activation.

It localises to the nucleus. The protein localises to the chromosome. Functionally, core component of nucleosome. Nucleosomes wrap and compact DNA into chromatin, limiting DNA accessibility to the cellular machineries which require DNA as a template. Histones thereby play a central role in transcription regulation, DNA repair, DNA replication and chromosomal stability. DNA accessibility is regulated via a complex set of post-translational modifications of histones, also called histone code, and nucleosome remodeling. This is Histone H2B.10 from Arabidopsis thaliana (Mouse-ear cress).